The sequence spans 380 residues: MSEDFYSVLGVSRDADEDEIKQAYRKKASEYHPDVSDDPNAEEKFKQVKKAKEVLLDDEKRRMYDQMGHERFQEAEKRGATDTDRGRGGMGGMGGGGMGGMNDIFEQFFGGGGRSQSRSGPRQGSDLKTRLKVDLEDAYHGVTKQLTVTRPEECPDCDGAGHPPDADSRTCSACDGRGQQTTVRQTALGRVQQTRECPQCDGKGTIYSETCSTCRGDGQVRNETTLQVEVPAGIRDGQTLRMDGEGAPGENGGRKGDLLVEIRIDDHETFERDGDDLRCRHPISFPQAVFGDTVEVPTLDGAVEMDVPAGTQSGETFRLRGKGMPRLKRRGHGDLYVQVRVVTPESLNEEQREALEAFAEAGGEEIDVEQGFFEKLKSSF.

In terms of domain architecture, J spans 4-68 (DFYSVLGVSR…EKRRMYDQMG (65 aa)). Residues 27–87 (KASEYHPDVS…RGATDTDRGR (61 aa)) are compositionally biased toward basic and acidic residues. Residues 27–126 (KASEYHPDVS…SRSGPRQGSD (100 aa)) are disordered. Over residues 88-100 (GGMGGMGGGGMGG) the composition is skewed to gly residues. Positions 115–124 (SQSRSGPRQG) are enriched in low complexity. Residues 141–223 (GVTKQLTVTR…CRGDGQVRNE (83 aa)) form a CR-type zinc finger. The Zn(2+) site is built by Cys-154, Cys-157, Cys-171, Cys-174, Cys-197, Cys-200, Cys-211, and Cys-214. CXXCXGXG motif repeat units follow at residues 154–161 (CPDCDGAG), 171–178 (CSACDGRG), 197–204 (CPQCDGKG), and 211–218 (CSTCRGDG).

Belongs to the DnaJ family. In terms of assembly, homodimer. Requires Zn(2+) as cofactor.

Its subcellular location is the cytoplasm. Functionally, participates actively in the response to hyperosmotic and heat shock by preventing the aggregation of stress-denatured proteins and by disaggregating proteins, also in an autonomous, DnaK-independent fashion. Unfolded proteins bind initially to DnaJ; upon interaction with the DnaJ-bound protein, DnaK hydrolyzes its bound ATP, resulting in the formation of a stable complex. GrpE releases ADP from DnaK; ATP binding to DnaK triggers the release of the substrate protein, thus completing the reaction cycle. Several rounds of ATP-dependent interactions between DnaJ, DnaK and GrpE are required for fully efficient folding. Also involved, together with DnaK and GrpE, in the DNA replication of plasmids through activation of initiation proteins. This chain is Chaperone protein DnaJ, found in Natronomonas pharaonis (strain ATCC 35678 / DSM 2160 / CIP 103997 / JCM 8858 / NBRC 14720 / NCIMB 2260 / Gabara) (Halobacterium pharaonis).